The primary structure comprises 372 residues: NADH-quinone oxidoreductase subunit H (372 aa).

A run of 8 helical transmembrane segments spans residues 34–54, 106–126, 139–159, 178–198, 217–237, 269–289, 313–333, and 352–372; these read LPLG…LYAL, FLFV…FAVL, VGLF…LAAG, IVSY…MAGT, FFLF…IASL, VIFL…AIVF, VWGA…QMWL, and VLTP…IYVP.

Belongs to the complex I subunit 1 family. As to quaternary structure, NDH-1 is composed of 14 different subunits. Subunits NuoA, H, J, K, L, M, N constitute the membrane sector of the complex.

Its subcellular location is the cell inner membrane. It carries out the reaction a quinone + NADH + 5 H(+)(in) = a quinol + NAD(+) + 4 H(+)(out). NDH-1 shuttles electrons from NADH, via FMN and iron-sulfur (Fe-S) centers, to quinones in the respiratory chain. The immediate electron acceptor for the enzyme in this species is believed to be ubiquinone. Couples the redox reaction to proton translocation (for every two electrons transferred, four hydrogen ions are translocated across the cytoplasmic membrane), and thus conserves the redox energy in a proton gradient. This subunit may bind ubiquinone. The protein is NADH-quinone oxidoreductase subunit H of Chlorobium luteolum (strain DSM 273 / BCRC 81028 / 2530) (Pelodictyon luteolum).